Here is a 516-residue protein sequence, read N- to C-terminus: Flavonoid 3',5'-hydroxylase (516 aa).

Cysteine 453 is a binding site for heme.

Belongs to the cytochrome P450 family. It depends on heme as a cofactor.

The enzyme catalyses a 3',5'-unsubstituted flavanone + 2 reduced [NADPH--hemoprotein reductase] + 2 O2 = a 3',5'-dihydroxyflavanone + 2 oxidized [NADPH--hemoprotein reductase] + 2 H2O + 2 H(+). It functions in the pathway pigment biosynthesis; anthocyanin biosynthesis. In terms of biological role, catalyzes the 3'5'-hydroxylation of naringenin and eriodictyol to form 5,7,3,'4',5'-pentahydroxyflavanone and 3',5'-hydroxylation of dihydrokaempferol and dihydroquercetin to form dihydromyricetin. This chain is Flavonoid 3',5'-hydroxylase (CYP75A4), found in Gentiana triflora (Clustered gentian).